The primary structure comprises 322 residues: Ribose-phosphate pyrophosphokinase 1 (322 aa).

ATP is bound by residues 39–41 (DGE) and 98–99 (RQ). Mg(2+) contacts are provided by histidine 132 and aspartate 173. Residue lysine 196 is part of the active site. Residues arginine 198, aspartate 224, and 228-232 (DTAGT) each bind D-ribose 5-phosphate.

Belongs to the ribose-phosphate pyrophosphokinase family. Class I subfamily. Homohexamer. Mg(2+) serves as cofactor.

It is found in the cytoplasm. It carries out the reaction D-ribose 5-phosphate + ATP = 5-phospho-alpha-D-ribose 1-diphosphate + AMP + H(+). It functions in the pathway metabolic intermediate biosynthesis; 5-phospho-alpha-D-ribose 1-diphosphate biosynthesis; 5-phospho-alpha-D-ribose 1-diphosphate from D-ribose 5-phosphate (route I): step 1/1. Its function is as follows. Involved in the biosynthesis of the central metabolite phospho-alpha-D-ribosyl-1-pyrophosphate (PRPP) via the transfer of pyrophosphoryl group from ATP to 1-hydroxyl of ribose-5-phosphate (Rib-5-P). In Streptococcus agalactiae serotype III (strain NEM316), this protein is Ribose-phosphate pyrophosphokinase 1.